The primary structure comprises 979 residues: MRLPGRPGGPGGSGGLRVLLCLLLLGSRPGGCNAISAHGCLFDRRLCSHLEVCIQDGLFGQCQVGVGQARPLLQVTSPVLQRLQGVLRQLMSQGLSWHDDLTQYVISQEMERIPRLRPPEPHPRDRSGLVPRRPGPAGELLLQGIPTGSAPALQHRLPRPSVGGGRAGAGSPLSPLQAELLPPLLEHLLLPPQPPHPALSYEPALLQPYLFHQFGSRDGSRGSESSPGMVSVDPLPKAEAPAFLSRAGSKGMFGAHPGHSYGDPPGPPPAQLFQESELFYLAQESQVPSRTRAPRLPEPGGSSRAGDSSEGYEEEGLEGREEKPPAPAEQPDVTLQRVAAVLAGYGVELHQLTPEQLSTLSTLLQLLPKGSRQNPGGAVNVGADIKKTMEEQVQGEDPAEPPPPMPSLPGSPTGSSTSNKAQKELSTGASEPPKAAGPPATPVLVEKKSPLGQNQPTMAGQPSTRPSAEEYGYIVTDQKPLSLAAGVRLLEILAEHVHMSSGSFINISVVGPALTFRIRHNEQNLSLADVTQQAGLVKSELEAQTGLQILQTGVGQREEAAAILPRPAHSTSPMRSVLLTLVALAGVAGLLVALAVALCVRQHARQRDKERLAALGPEGAHGDTTFEYQDLCRQHMATKSLFNRAEGPPEPSRVSSVSSQFSDAAQASPSSHSSTPSWCEEPAQANMDISTGHMILAYMEDHLRNRDRLAKEWQALCAYQAEPNTCATAQGEGNIKKNRHPDFLPYDHARIKLKVESSPSRSDYINASPIIEHDPRMPAYIATQGPLSHTIADFWQMVWESGCTVIVMLTPLVEDGVKQCDRYWPDEGSSLYHVYEVNLVSEHIWCEDFLVRSFYLKNVQTQETRTLTQFHFLSWPAEGTPASTRPLLDFRRKVNKCYRGRSCPIIVHCSDGAGRTGTYILIDMVLNRMAKGVKEIDIAATLEHVRDQRPGLVRSKDQFEFALTAVAEEVNAILKALPQ.

Positions 1–34 are cleaved as a signal peptide; sequence MRLPGRPGGPGGSGGLRVLLCLLLLGSRPGGCNA. Residues 35-131 form an RESP18 homology domain region; sequence ISAHGCLFDR…HPRDRSGLVP (97 aa). At 35 to 575 the chain is on the lumenal side; the sequence is ISAHGCLFDR…RPAHSTSPMR (541 aa). A disulfide bond links Cys53 and Cys62. The span at 113 to 127 shows a compositional bias: basic and acidic residues; sequence IPRLRPPEPHPRDRS. Disordered stretches follow at residues 113 to 171, 248 to 272, 285 to 332, and 391 to 466; these read IPRL…GAGS, GSKG…PAQL, SQVP…EQPD, and EQVQ…STRP. A phosphoserine mark is found at Ser308 and Ser309. Residues 400–409 show a composition bias toward pro residues; the sequence is EPPPPMPSLP. The segment at 449 to 575 is sufficient for dimerization of proICA512; it reads SPLGQNQPTM…RPAHSTSPMR (127 aa). Positions 451–466 are enriched in polar residues; it reads LGQNQPTMAGQPSTRP. Residues Asn506 and Asn524 are each glycosylated (N-linked (GlcNAc...) asparagine). A helical transmembrane segment spans residues 576–600; the sequence is SVLLTLVALAGVAGLLVALAVALCV. A sufficient for dimerization of proICA512 region spans residues 601-732; that stretch reads RQHARQRDKE…PNTCATAQGE (132 aa). Topologically, residues 601-979 are cytoplasmic; sequence RQHARQRDKE…VNAILKALPQ (379 aa). Residues 643–680 are disordered; that stretch reads NRAEGPPEPSRVSSVSSQFSDAAQASPSSHSSTPSWCE. The segment covering 652-677 has biased composition (low complexity); that stretch reads SRVSSVSSQFSDAAQASPSSHSSTPS. Residues 709-969 enclose the Tyrosine-protein phosphatase domain; that stretch reads LAKEWQALCA…EFALTAVAEE (261 aa). Lys754 participates in a covalent cross-link: Glycyl lysine isopeptide (Lys-Gly) (interchain with G-Cter in SUMO).

The protein belongs to the protein-tyrosine phosphatase family. Receptor class 8 subfamily. Homodimer; shown for the unprocessed protein (proICA512) in the endoplasmic reticulum and resolved during protein maturation as ICA512-TMF seems to be predominantly monomeric in secretory granules; however, ICA512-CCF interacts with ICA512-TMF disrupting the ICA512-TMF:SNTB2 complex. The isolated lumenal RESP18 homology domain has been shown to form disulfide-linked homooligomers. Interacts (via cytoplasmic domain) with phosphorylated SNTB2; this protects PTPRN against cleavage by CAPN1 to produce ICA512-CCF. Dephosphorylation of SNTB2 upon insulin stimulation disrupts the interaction and results in PTPRN cleavage. Interacts with SNX19. ICA512-CCF interacts with PIAS4; in the nucleus. Interacts with STAT5B (phosphorylated); down-regulated by ICA512-CCF sumoylation; ICA512-CCF prevents STAT5B dephosphorylation; ICA512-CCF mediates interaction of STAT5B with PIAS4. Interacts (via RESP18 homology domain) with insulin and proinsulin. Interacts with PTPRN2, PTPRA and PTPRE. In terms of processing, N-glycosylated. O-glycosylated. Post-translationally, subject to proteolytic cleavage at multiple sites. Subject to cleavage on a pair of basic residues. On exocytosis of secretory granules in pancreatic beta-cells ICA512-TMF is transiently inserted in the plasma-membrane and cleaved by mu-type calpain CPN1 to yield ICA512-CCF. In terms of processing, sumoylated at two sites including Lys-754. Sumoylation decreases interaction with STAT5. As to expression, detected in pituitary (at protein level).

Its subcellular location is the membrane. The protein resides in the cytoplasmic vesicle. It localises to the secretory vesicle membrane. It is found in the perikaryon. The protein localises to the cell projection. Its subcellular location is the axon. The protein resides in the synapse. It localises to the cell membrane. It is found in the endosome. The protein localises to the nucleus. In terms of biological role, plays a role in vesicle-mediated secretory processes. Required for normal accumulation of secretory vesicles in hippocampus, pituitary and pancreatic islets. Required for the accumulation of normal levels of insulin-containing vesicles and preventing their degradation. Plays a role in insulin secretion in response to glucose stimuli. Required for normal accumulation of the neurotransmitters norepinephrine, dopamine and serotonin in the brain. In females, but not in males, required for normal accumulation and secretion of pituitary hormones, such as luteinizing hormone (LH) and follicle-stimulating hormone (FSH). Required to maintain normal levels of renin expression and renin release. Seems to lack intrinsic enzyme activity. May regulate catalytic active protein-tyrosine phosphatases such as PTPRA through dimerization. Its function is as follows. ICA512-TMF regulates dynamics and exocytosis of insulin secretory granules (SGs); binding of ICA512-TMF to SNTB2/beta-2-syntrophin is proposed to restrain SGs mobility and exocytosis by tethering them to the actin cytoskeleton depending on UTRN; the function is inhibited by cytoplasmic ICA512-CFF dimerizing with ICA512-TMF and displacing SNTB2. ICA512-CCF translocated to the nucleus promotes expression of insulin and other granule-related genes; the function implicates binding to and regulating activity of STAT5B probably by preventing its dephosphorylation and potentially by inducing its sumoylation by recruiting PIAS4. Enhances pancreatic beta-cell proliferation by converging with signaling by STAT5B and STAT3. ICA512-CCF located in the cytoplasm regulates dynamics and exocytosis of insulin secretory granules (SGs) by dimerizing with ICA512-TMF and displacing SNTB2 thus enhancing SGs mobility and exocytosis. The protein is Receptor-type tyrosine-protein phosphatase-like N (PTPRN) of Bos taurus (Bovine).